The sequence spans 367 residues: DNA replication and repair protein RecF (367 aa).

Glycine 30 to threonine 37 lines the ATP pocket.

Belongs to the RecF family.

It is found in the cytoplasm. The RecF protein is involved in DNA metabolism; it is required for DNA replication and normal SOS inducibility. RecF binds preferentially to single-stranded, linear DNA. It also seems to bind ATP. This chain is DNA replication and repair protein RecF, found in Pseudomonas fluorescens (strain SBW25).